Reading from the N-terminus, the 344-residue chain is MMVIRSVERSDVSALMQLASKTGGGLTSLPANEATLSARIERAIKTWQGELPKSEQGYVFVLEDSETGTVAGICAIEVAVGLNDPWYNYRVGTLVHASKELNVYNALPTLFLSNDHTGSSELCTLFLDPDWRKEGNGYLLSKSRFMFMAAFRDKFNDKVVAEMRGVIDEHGYSPFWQSLGKRFFSMDFSRADFLCGTGQKAFIAELMPKHPIYTHFLSQEAQDVIGQVHPQTAPARAVLEKEGFRYRNYIDIFDGGPTLECDIDRVRAIRKSRLVEVAEGQPAQGDFPACLVANENYHHFRVVLVRTDPATERLILTAAQLDALKCHAGDRVRLVRLCAEEKTA.

Leu125 is a binding site for succinyl-CoA. His229 serves as the catalytic Proton donor.

The protein belongs to the arginine N-succinyltransferase family.

The enzyme catalyses succinyl-CoA + L-arginine = N(2)-succinyl-L-arginine + CoA + H(+). It participates in amino-acid degradation; L-arginine degradation via AST pathway; L-glutamate and succinate from L-arginine: step 1/5. Its function is as follows. Catalyzes the transfer of succinyl-CoA to arginine to produce N(2)-succinylarginine. The chain is Arginine N-succinyltransferase from Shigella dysenteriae serotype 1 (strain Sd197).